We begin with the raw amino-acid sequence, 273 residues long: 2,3,4,5-tetrahydropyridine-2,6-dicarboxylate N-succinyltransferase (273 aa).

Substrate-binding residues include Arg-105 and Asp-142.

The protein belongs to the transferase hexapeptide repeat family. In terms of assembly, homotrimer.

It localises to the cytoplasm. The enzyme catalyses (S)-2,3,4,5-tetrahydrodipicolinate + succinyl-CoA + H2O = (S)-2-succinylamino-6-oxoheptanedioate + CoA. The protein operates within amino-acid biosynthesis; L-lysine biosynthesis via DAP pathway; LL-2,6-diaminopimelate from (S)-tetrahydrodipicolinate (succinylase route): step 1/3. The polypeptide is 2,3,4,5-tetrahydropyridine-2,6-dicarboxylate N-succinyltransferase (Bordetella bronchiseptica (strain ATCC BAA-588 / NCTC 13252 / RB50) (Alcaligenes bronchisepticus)).